The following is a 423-amino-acid chain: UDP-N-acetylglucosamine 1-carboxyvinyltransferase 1 (423 aa).

Phosphoenolpyruvate is bound at residue 24 to 25 (KN). Residue Arg94 participates in UDP-N-acetyl-alpha-D-glucosamine binding. Cys118 (proton donor) is an active-site residue. 2-(S-cysteinyl)pyruvic acid O-phosphothioketal is present on Cys118. UDP-N-acetyl-alpha-D-glucosamine-binding positions include 123–127 (RPIDQ), Asp309, and Ile331.

The protein belongs to the EPSP synthase family. MurA subfamily.

Its subcellular location is the cytoplasm. The enzyme catalyses phosphoenolpyruvate + UDP-N-acetyl-alpha-D-glucosamine = UDP-N-acetyl-3-O-(1-carboxyvinyl)-alpha-D-glucosamine + phosphate. Its pathway is cell wall biogenesis; peptidoglycan biosynthesis. Its function is as follows. Cell wall formation. Adds enolpyruvyl to UDP-N-acetylglucosamine. The polypeptide is UDP-N-acetylglucosamine 1-carboxyvinyltransferase 1 (Staphylococcus haemolyticus (strain JCSC1435)).